A 540-amino-acid chain; its full sequence is Chaperonin GroEL (540 aa).

ATP-binding positions include 29–32, 86–90, Gly-413, 476–478, and Asp-492; these read TLGP, DGTTT, and NAA.

It belongs to the chaperonin (HSP60) family. As to quaternary structure, forms a cylinder of 14 subunits composed of two heptameric rings stacked back-to-back. Interacts with the co-chaperonin GroES.

It is found in the cytoplasm. It carries out the reaction ATP + H2O + a folded polypeptide = ADP + phosphate + an unfolded polypeptide.. Functionally, together with its co-chaperonin GroES, plays an essential role in assisting protein folding. The GroEL-GroES system forms a nano-cage that allows encapsulation of the non-native substrate proteins and provides a physical environment optimized to promote and accelerate protein folding. This chain is Chaperonin GroEL, found in Streptococcus agalactiae serotype V (strain ATCC BAA-611 / 2603 V/R).